A 525-amino-acid chain; its full sequence is Bifunctional purine biosynthesis protein PurH (525 aa).

One can recognise an MGS-like domain in the interval 1–148 (MPSNNLIKNA…KNYKNVIVIV (148 aa)).

This sequence belongs to the PurH family.

It carries out the reaction (6R)-10-formyltetrahydrofolate + 5-amino-1-(5-phospho-beta-D-ribosyl)imidazole-4-carboxamide = 5-formamido-1-(5-phospho-D-ribosyl)imidazole-4-carboxamide + (6S)-5,6,7,8-tetrahydrofolate. The catalysed reaction is IMP + H2O = 5-formamido-1-(5-phospho-D-ribosyl)imidazole-4-carboxamide. The protein operates within purine metabolism; IMP biosynthesis via de novo pathway; 5-formamido-1-(5-phospho-D-ribosyl)imidazole-4-carboxamide from 5-amino-1-(5-phospho-D-ribosyl)imidazole-4-carboxamide (10-formyl THF route): step 1/1. Its pathway is purine metabolism; IMP biosynthesis via de novo pathway; IMP from 5-formamido-1-(5-phospho-D-ribosyl)imidazole-4-carboxamide: step 1/1. The polypeptide is Bifunctional purine biosynthesis protein PurH (Buchnera aphidicola subsp. Acyrthosiphon pisum (strain APS) (Acyrthosiphon pisum symbiotic bacterium)).